We begin with the raw amino-acid sequence, 104 residues long: Iron-sulfur cluster assembly protein CyaY (104 aa).

Belongs to the frataxin family.

Functionally, involved in iron-sulfur (Fe-S) cluster assembly. May act as a regulator of Fe-S biogenesis. The sequence is that of Iron-sulfur cluster assembly protein CyaY from Vibrio parahaemolyticus serotype O3:K6 (strain RIMD 2210633).